Reading from the N-terminus, the 744-residue chain is TonB-dependent heme receptor A (744 aa).

Residues 1-24 (MNILINKRIFLLVTLVGIQLNVTA) form the signal peptide. The 113-residue stretch at 45–157 (DDSNKLPGRS…FAGTVKFETK (113 aa)) folds into the TBDR plug domain. One can recognise a TBDR beta-barrel domain in the interval 168-744 (KIGGFLKYGN…NIKFSLSQKF (577 aa)).

This sequence belongs to the TonB-dependent receptor family.

The protein resides in the cell outer membrane. Heme receptor. The polypeptide is TonB-dependent heme receptor A (tdhA) (Haemophilus influenzae (strain ATCC 51907 / DSM 11121 / KW20 / Rd)).